A 334-amino-acid polypeptide reads, in one-letter code: Amino acid--[acyl-carrier-protein] ligase 2 (334 aa).

Residue C131 coordinates Zn(2+). ATP is bound by residues R159, E161, and 168-169 (RL). E176 contributes to the Zn(2+) binding site. Residue E176 participates in an L-alpha-amino acid binding. ATP is bound by residues K235 and 250-253 (ACMS). C279 is a binding site for Zn(2+). Residue R286 coordinates ATP.

This sequence belongs to the class-II aminoacyl-tRNA synthetase family. Amino acid--[acyl-carrier-protein] ligase subfamily. As to quaternary structure, homodimer. Requires Zn(2+) as cofactor.

It carries out the reaction an L-alpha-amino acid + holo-[ACP] + ATP = an L-alpha-aminoacyl-[ACP] + AMP + diphosphate. Its function is as follows. Catalyzes the ATP-dependent activation of L-glycine and its transfer to the phosphopantetheine prosthetic group covalently attached to the vicinal carrier protein blr6284 of yet unknown function. May participate in nonribosomal peptide synthesis or related processes. L-alanine is a poor substrate whereas L-serine or D-amino acids are not substrates for ATP-dependent activation. Does not display tRNA aminoacylation activity. This chain is Amino acid--[acyl-carrier-protein] ligase 2, found in Bradyrhizobium diazoefficiens (strain JCM 10833 / BCRC 13528 / IAM 13628 / NBRC 14792 / USDA 110).